Consider the following 141-residue polypeptide: Large ribosomal subunit protein uL11 (141 aa).

It belongs to the universal ribosomal protein uL11 family. Part of the ribosomal stalk of the 50S ribosomal subunit. Interacts with L10 and the large rRNA to form the base of the stalk. L10 forms an elongated spine to which L12 dimers bind in a sequential fashion forming a multimeric L10(L12)X complex. One or more lysine residues are methylated.

Its function is as follows. Forms part of the ribosomal stalk which helps the ribosome interact with GTP-bound translation factors. The sequence is that of Large ribosomal subunit protein uL11 from Ruegeria pomeroyi (strain ATCC 700808 / DSM 15171 / DSS-3) (Silicibacter pomeroyi).